The chain runs to 234 residues: Glucosamine-6-phosphate deaminase (234 aa).

Asp63 acts as the Proton acceptor; for enolization step in catalysis. Asn129 (for ring-opening step) is an active-site residue. Residue His131 is the Proton acceptor; for ring-opening step of the active site. Glu136 (for ring-opening step) is an active-site residue.

The protein belongs to the glucosamine/galactosamine-6-phosphate isomerase family. NagB subfamily.

The catalysed reaction is alpha-D-glucosamine 6-phosphate + H2O = beta-D-fructose 6-phosphate + NH4(+). Its pathway is amino-sugar metabolism; N-acetylneuraminate degradation; D-fructose 6-phosphate from N-acetylneuraminate: step 5/5. Functionally, catalyzes the reversible isomerization-deamination of glucosamine 6-phosphate (GlcN6P) to form fructose 6-phosphate (Fru6P) and ammonium ion. The protein is Glucosamine-6-phosphate deaminase of Listeria innocua serovar 6a (strain ATCC BAA-680 / CLIP 11262).